We begin with the raw amino-acid sequence, 394 residues long: Elongation factor Tu 2 (394 aa).

One can recognise a tr-type G domain in the interval 9–204; that stretch reads KPHCNIGTIG…SIDDYIPQPT (196 aa). Residues 18-25 form a G1 region; that stretch reads GHVDHGKT. 18 to 25 serves as a coordination point for GTP; sequence GHVDHGKT. T25 lines the Mg(2+) pocket. The segment at 61–65 is G2; the sequence is GITIQ. The G3 stretch occupies residues 82–85; the sequence is DCPG. Residues 82–86 and 137–140 each bind GTP; these read DCPGH and NKID. The tract at residues 137-140 is G4; sequence NKID. Positions 174 to 176 are G5; sequence SAL.

The protein belongs to the TRAFAC class translation factor GTPase superfamily. Classic translation factor GTPase family. EF-Tu/EF-1A subfamily. As to quaternary structure, monomer.

It is found in the cytoplasm. It carries out the reaction GTP + H2O = GDP + phosphate + H(+). GTP hydrolase that promotes the GTP-dependent binding of aminoacyl-tRNA to the A-site of ribosomes during protein biosynthesis. This is Elongation factor Tu 2 from Orientia tsutsugamushi (strain Boryong) (Rickettsia tsutsugamushi).